Reading from the N-terminus, the 673-residue chain is Potassium voltage-gated channel subfamily KQT member 1 (673 aa).

Disordered stretches follow at residues 1 to 28 and 61 to 80; these read MAAATSPPRAERKRWGGGRLPGARRGSA and GPSSPAAPAASPAAADLGPR. Topologically, residues 1–118 are cytoplasmic; sequence MAAATSPPRA…YNFLERPTGW (118 aa). S27 carries the post-translational modification Phosphoserine. The span at 66–75 shows a compositional bias: low complexity; the sequence is AAPAASPAAA. Residues 119–140 form a helical membrane-spanning segment; it reads KCFVYHFAVFLIVLVCLIFSVL. The Extracellular portion of the chain corresponds to 141 to 151; it reads STIEQYVALAT. A helical transmembrane segment spans residues 152–174; the sequence is GTLFWMEIVLVVFFGTEYAVRLW. The Cytoplasmic portion of the chain corresponds to 175-190; it reads SAGCRSKYVGIWGRLR. A helical membrane pass occupies residues 191-216; that stretch reads FARKPISIIDLIVVVASMVVLCVGSK. Residues 217 to 224 are Extracellular-facing; sequence GQVFATSA. Residues 225 to 240 form a helical; Voltage-sensor membrane-spanning segment; it reads IRGIRFLQILRMLHVD. The interval 236 to 244 is interaction with KCNE3; sequence MLHVDRQGG. The Cytoplasmic segment spans residues 241 to 258; that stretch reads RQGGTWRLLGSVVFIHRQ. Q242 contacts a 1,2-diacyl-sn-glycero-3-phospho-(1D-myo-inositol-4,5-bisphosphate). The chain crosses the membrane as a helical span at residues 259 to 281; it reads ELITTLYIGFLGLIFSSYFVYLA. The Extracellular portion of the chain corresponds to 282–297; sequence EKDAVNESGQVEFGSY. N-linked (GlcNAc...) asparagine glycosylation occurs at N287. Positions 298–318 form an intramembrane region, pore-forming; the sequence is ADALWWGVVTVTTIGYGDKVP. Residues 319–320 lie on the Extracellular side of the membrane; the sequence is QT. The helical transmembrane segment at 321 to 346 threads the bilayer; that stretch reads WVGKTIASCFSVFAISFFALPAGILG. Residues 347-673 are Cytoplasmic-facing; it reads SGFALKVQQK…VPGRGPEEGS (327 aa). An interaction with CALM region spans residues 368–380; it reads AAASLIQTAWRCY. Phosphoserine is present on residues S405 and S407. The interaction with CALM; calcium-dependent stretch occupies residues 514 to 528; that stretch reads KVIRRMQYFVAKKKF. Residues 534–571 are interaction with KCNE1 C-terminus; that stretch reads PYDVRDVIEQYSQGHLNLMVRIKELQRRLDQSIGRPAL. Positions 587–615 are interaction with AKAP9; it reads IGARLNRVEDKVTQLDQRLELITDMLQQL. The interval 588 to 619 is C-terminal assembly domain (tetramerization); sequence GARLNRVEDKVTQLDQRLELITDMLQQLLSLH. The interval 619-673 is disordered; sequence HRGGTPGSRAPGGGGAQVAQPCSGGSINPELFLPSNALPTYEQLTVPGRGPEEGS. Residues 622–634 show a composition bias toward gly residues; the sequence is GTPGSRAPGGGGA.

Belongs to the potassium channel family. KQT (TC 1.A.1.15) subfamily. Kv7.1/KCNQ1 sub-subfamily. As to quaternary structure, tetramer. Heterotetramer with KCNE1; targets to the membrane raft. Interacts (via C-terminus) with CALM; forms a heterooctameric structure (with 4:4 KCNQ1:CALM stoichiometry) in a calcium-independent manner. Interacts with AKAP9; targets protein kinase A (PKA) catalytic and regulatory subunits and protein phosphatase 1 (PP1) to the KCNQ1-KCNE1 complex, allowing PKA-mediated phosphorylation and increase of delayed rectifier potassium channel activity. Interacts with KCNE2; form a heterooligomer complex that targets to the membrane raft and leading to currents with an apparently instantaneous activation, a rapid deactivation process and a linear current-voltage relationship and decreases the amplitude of the outward current. Interacts with AP2M1; mediates estrogen-induced internalization via clathrin-coated vesicles. Interacts with NEDD4L; promotes internalization and decreases I(Ks) currents. Interacts with USP2; counteracts the NEDD4L-specific down-regulation of I(Ks) and restore plasma membrane localization. Heterotetramer with KCNQ5; has a voltage-gated potassium channel activity. Interacts with KCNE3; four KCNE3 molecules are bound to one KCNQ1 tetramer (4:4 KCNQ1:KCNE3 stoichiometry); alters membrane raft localization; affects KCNQ1 structure and gating properties. Interacts with KCNE4; impairs KCNQ1 localization in lipid rafts and inhibits voltage-gated potassium channel activity. Interacts with KCNE5; impairs KCNQ1 localization in lipid rafts and only conducts current upon strong and continued depolarization. Interacts with SLC5A3; forms coregulatory channel-transporter complexes that modulate Na(+)-coupled myo-inositol influx through the transporter. Post-translationally, ubiquitinated by NEDD4L; promotes internalization. The ubiquitinylated form is internalized through a clathrin-mediated endocytosis by interacting with AP2M1 and is recycled back to the cell membrane via RAB4A and RAB11A. Deubiquitinated by USP2; counteracts the NEDD4L-specific down-regulation of I(Ks) and restores the membrane localization.

It is found in the cell membrane. It localises to the cytoplasmic vesicle membrane. The protein localises to the early endosome. Its subcellular location is the membrane raft. The protein resides in the endoplasmic reticulum. It is found in the basolateral cell membrane. It localises to the apical cell membrane. It carries out the reaction K(+)(in) = K(+)(out). Its activity is regulated as follows. PIP2 molecule is essential to activate KCNQ channels by inducing the coupling of the voltage-sensing domain (VSD) and the pore-forming domain (PD). Upon channel activation, PIP2 disrupts the VSD-calmodulin/CALM interactions, causing the release of CALM from the VSD which triggers the opening of the gate. Calcium potentiates KCNQ1 channel current through calcium-bound CALM. Calcium-bound CALM competes with PIP2 to stabilize the channel open state. Its function is as follows. Pore-forming subunit of the voltage-gated potassium (Kv) channel involved in the regulation of cardiomyocyte excitability and important in normal development and functions of myocardium, inner ear, stomach and colon. Associates with KCNE beta subunits that modulates current kinetics. Induces a voltage-dependent by rapidly activating and slowly deactivating potassium-selective outward current. Also promotes a delayed voltage activated potassium current showing outward rectification characteristic. During beta-adrenergic receptor stimulation participates in cardiac repolarization by associating with KCNE1 to form the I(Ks) cardiac potassium current that increases the amplitude and slows down the activation kinetics of outward potassium current I(Ks). Muscarinic agonist oxotremorine-M strongly suppresses KCNQ1/KCNE1 current. When associated with KCNE3, forms the potassium channel that is important for cyclic AMP-stimulated intestinal secretion of chloride ions. This interaction with KCNE3 is reduced by 17beta-estradiol, resulting in the reduction of currents. During conditions of increased substrate load, maintains the driving force for proximal tubular and intestinal sodium ions absorption, gastric acid secretion, and cAMP-induced jejunal chloride ions secretion. Allows the provision of potassium ions to the luminal membrane of the secretory canaliculus in the resting state as well as during stimulated acid secretion. When associated with KCNE2, forms a heterooligomer complex leading to currents with an apparently instantaneous activation, a rapid deactivation process and a linear current-voltage relationship and decreases the amplitude of the outward current. When associated with KCNE4, inhibits voltage-gated potassium channel activity. When associated with KCNE5, this complex only conducts current upon strong and continued depolarization. Also forms a heterotetramer with KCNQ5 that has a voltage-gated potassium channel activity. Binds with phosphatidylinositol 4,5-bisphosphate. KCNQ1-KCNE2 channel associates with Na(+)-coupled myo-inositol symporter in the apical membrane of choroid plexus epithelium and regulates the myo-inositol gradient between blood and cerebrospinal fluid with an impact on neuron excitability. The protein is Potassium voltage-gated channel subfamily KQT member 1 of Sus scrofa (Pig).